A 1012-amino-acid polypeptide reads, in one-letter code: Putative cellulose synthase-like protein D5 (1012 aa).

The tract at residues 1–85 is disordered; sequence MSGDYANYTV…APSSNKSLLV (85 aa). The segment covering 20-37 has biased composition (low complexity); sequence PSGGAPPAAPSAGGARPG. Basic and acidic residues predominate over residues 57 to 69; it reads GGGDDGAKMDRRL. The next 2 helical transmembrane spans lie at 150–170 and 180–200; these read ILSPYRLLVLVRFVALFLFLV and ALWLWGISIVCEFWFAFSWLL. Asp-280 is an active-site residue. The interval 597–620 is disordered; that stretch reads PRQGSEAMPGAGGGRSGGGSVGGD. A compositionally biased stretch (gly residues) spans 606–618; it reads GAGGGRSGGGSVG. Asp-717 is an active-site residue. The next 6 helical transmembrane spans lie at 799–819, 825–845, 871–891, 914–934, 948–968, and 978–998; these read LFLIMYCLLPALSLFSGQFIV, TFLSYLLLITITLMLLCLLEV, LAAVLQGLLKVVAGIEISFTL, SLFIPPLAVIGINIIALVVGV, LLGGGFFSFWVLAHYYPFAKG, and TIVYVWAGLISITVSLLWITI.

The protein belongs to the glycosyltransferase 2 family. Plant cellulose synthase-like D subfamily.

Its subcellular location is the golgi apparatus membrane. Thought to be a Golgi-localized beta-glycan synthase that polymerize the backbones of noncellulosic polysaccharides (hemicelluloses) of plant cell wall. The chain is Putative cellulose synthase-like protein D5 (CSLD5) from Oryza sativa subsp. indica (Rice).